Here is a 238-residue protein sequence, read N- to C-terminus: Probable RNA/DNA demethylase ALKBH6 (238 aa).

The Fe2OG dioxygenase domain maps to 96–227; that stretch reads PANHVLVNQY…RVSLTIRRVP (132 aa). Residues N103 and Y105 each contribute to the 2-oxoglutarate site. Residues H114 and D116 each coordinate Fe cation. The segment at 138–161 is disordered; that stretch reads YEPRRPEDDDPTEQPRPPPRPTTS. Position 182 (H182) interacts with Fe cation. 2-oxoglutarate-binding residues include R218 and S220.

It belongs to the alkB family. In terms of assembly, interacts with VCPKMT. Requires Fe(2+) as cofactor. As to expression, widely expressed, with highest expression in testis and pancreas.

The protein localises to the cytoplasm. Its subcellular location is the nucleus. Probable Fe(2+)/2-oxoglutarate-dependent dioxygenase involved in oxidative demethylation of nucleic acids. Binds nucleic acids with a preference for ssDNA or ssRNA to other types of DNAs. May play a role in nucleic acid damage repair. The protein is Probable RNA/DNA demethylase ALKBH6 of Homo sapiens (Human).